We begin with the raw amino-acid sequence, 396 residues long: 3-amino-4-hydroxybenzoate 2-monooxygenase PtmB3 (396 aa).

FAD is bound by residues Ala19, 38 to 39, and Arg112; that span reads EQ. Tyr217 acts as the Proton acceptor in catalysis. Position 295 (Asp295) interacts with FAD. The interval 352-371 is disordered; it reads RERGHEFHLPDGPQQRLRDR.

This sequence belongs to the 6-hydroxynicotinate 3-monooxygenase family. It depends on FAD as a cofactor.

It carries out the reaction 3-amino-4-hydroxybenzoate + NADPH + O2 + H(+) = 3-amino-2,4-dihydroxybenzoate + NADP(+) + H2O. It participates in antibiotic biosynthesis. Its function is as follows. Part of a gene cluster involved in the biosynthesis of thioplatensimycin (thioPTM) and platensimycin (PTM), potent and selective inhibitors of bacterial and mammalian fatty acid synthases. Catalyzes the hydroxylation of 3-amino-4-hydroxybenzoate (3,4-AHBA) to 3-amino-2,4-dihydroxybenzoate (3,2,4-ADHBA). The polypeptide is 3-amino-4-hydroxybenzoate 2-monooxygenase PtmB3 (Streptomyces platensis).